Consider the following 310-residue polypeptide: Methionyl-tRNA formyltransferase (310 aa).

114–117 (SLLP) contacts (6S)-5,6,7,8-tetrahydrofolate.

Belongs to the Fmt family.

It carries out the reaction L-methionyl-tRNA(fMet) + (6R)-10-formyltetrahydrofolate = N-formyl-L-methionyl-tRNA(fMet) + (6S)-5,6,7,8-tetrahydrofolate + H(+). In terms of biological role, attaches a formyl group to the free amino group of methionyl-tRNA(fMet). The formyl group appears to play a dual role in the initiator identity of N-formylmethionyl-tRNA by promoting its recognition by IF2 and preventing the misappropriation of this tRNA by the elongation apparatus. This Granulibacter bethesdensis (strain ATCC BAA-1260 / CGDNIH1) protein is Methionyl-tRNA formyltransferase.